The following is a 401-amino-acid chain: E3 ubiquitin-protein ligase DA2 (401 aa).

The RING-type; degenerate zinc finger occupies 59–102; it reads CPICFLYYPSLNRSRCCMKSICTECFLQMKNPNSARPTQCPFCK. Residues 139 to 153 are compositionally biased toward basic and acidic residues; it reads KEMQDDEEKMQKRLE. The disordered stretch occupies residues 139-164; sequence KEMQDDEEKMQKRLESCSSSTSAMTG.

Interacts with DA1 (via C-terminus).

The enzyme catalyses S-ubiquitinyl-[E2 ubiquitin-conjugating enzyme]-L-cysteine + [acceptor protein]-L-lysine = [E2 ubiquitin-conjugating enzyme]-L-cysteine + N(6)-ubiquitinyl-[acceptor protein]-L-lysine.. Its pathway is protein modification; protein ubiquitination. Its function is as follows. E3 ubiquitin-protein ligase involved in the regulation of organ and seed size. Acts synergistically with DA1 to regulate seed size. Functions synergistically with DA1 to restrict cell proliferation in the maternal integuments of ovules and developing seeds. Seems to function independently of BB. Possesses E3 ubiquitin-protein ligase activity in vitro. Polyubiquitinates DA1, DAR1 and DAR2, but not DAR3. The polypeptide is E3 ubiquitin-protein ligase DA2 (Arabidopsis thaliana (Mouse-ear cress)).